The chain runs to 257 residues: Outer membrane protein YaiO (257 aa).

The first 19 residues, Met-1 to Ala-19, serve as a signal peptide directing secretion.

It is found in the cell outer membrane. The sequence is that of Outer membrane protein YaiO (yaiO) from Escherichia coli (strain K12).